A 357-amino-acid chain; its full sequence is MAEFVRAQIFGTTFEITSRYSDLQPVGMGAFGLVCSARDQLTNQNVAVKKIMKPFSTPVLAKRTYRELKLLKHLKHENVISLSDIFISPLEDIYFVTELLGTDLHRLLTSRPLEKQFIQYFLYQIMRGLKYVHSAGVVHRDLKPSNILVNENCDLKICDFGLARIQDPQMTGYVSTRYYRAPEIMLTWQKYDVEVDIWSAGCIFAEMLEGKPLFPGKDHVNQFSIITELLGTPPDDVINTIASENTLRFVKSLPKRERQPLRNKFKNADDSAIDLLERMLVFDPKKRITATEALAHDYLSPYHDPTDEPVAEEKFDWSFNDADLPVDTWKIMMYSEILDYHNVEAGVTNMEEQFNGQ.

The Protein kinase domain occupies Y20–L299. ATP contacts are provided by residues V26–V34 and K49. The active-site Proton acceptor is D141. Residue T171 is modified to Phosphothreonine. The TXY motif lies at T171–Y173. Y173 is modified (phosphotyrosine).

Belongs to the protein kinase superfamily. Ser/Thr protein kinase family. MAP kinase subfamily. HOG1 sub-subfamily. Mg(2+) serves as cofactor. Post-translationally, dually phosphorylated on Thr-171 and Tyr-173, which activates the enzyme.

It localises to the cytoplasm. The protein localises to the nucleus. It carries out the reaction L-seryl-[protein] + ATP = O-phospho-L-seryl-[protein] + ADP + H(+). The enzyme catalyses L-threonyl-[protein] + ATP = O-phospho-L-threonyl-[protein] + ADP + H(+). With respect to regulation, activated by tyrosine and threonine phosphorylation. Proline-directed serine/threonine-protein kinase involved in a signal transduction pathway that is activated by changes in the osmolarity of the extracellular environment. Controls osmotic regulation of transcription of target genes. In Gibberella zeae (strain ATCC MYA-4620 / CBS 123657 / FGSC 9075 / NRRL 31084 / PH-1) (Wheat head blight fungus), this protein is Mitogen-activated protein kinase HOG1 (HOG1).